Here is a 341-residue protein sequence, read N- to C-terminus: Tetraacyldisaccharide 4'-kinase (341 aa).

T65–T72 is a binding site for ATP.

The protein belongs to the LpxK family.

The enzyme catalyses a lipid A disaccharide + ATP = a lipid IVA + ADP + H(+). The protein operates within glycolipid biosynthesis; lipid IV(A) biosynthesis; lipid IV(A) from (3R)-3-hydroxytetradecanoyl-[acyl-carrier-protein] and UDP-N-acetyl-alpha-D-glucosamine: step 6/6. Functionally, transfers the gamma-phosphate of ATP to the 4'-position of a tetraacyldisaccharide 1-phosphate intermediate (termed DS-1-P) to form tetraacyldisaccharide 1,4'-bis-phosphate (lipid IVA). In Shewanella woodyi (strain ATCC 51908 / MS32), this protein is Tetraacyldisaccharide 4'-kinase.